A 417-amino-acid chain; its full sequence is Tyrosine--tRNA ligase (417 aa).

Tyrosine 39 is a binding site for L-tyrosine. Positions 44-53 match the 'HIGH' region motif; the sequence is PTASSLHVGH. The L-tyrosine site is built by tyrosine 176 and glutamine 180. The 'KMSKS' region motif lies at 236-240; that stretch reads KMGKS. Position 239 (lysine 239) interacts with ATP. One can recognise an S4 RNA-binding domain in the interval 350-416; that stretch reads VGVLSLIVRA…GKKKHVLVRP (67 aa).

Belongs to the class-I aminoacyl-tRNA synthetase family. TyrS type 1 subfamily. In terms of assembly, homodimer.

Its subcellular location is the cytoplasm. It carries out the reaction tRNA(Tyr) + L-tyrosine + ATP = L-tyrosyl-tRNA(Tyr) + AMP + diphosphate + H(+). In terms of biological role, catalyzes the attachment of tyrosine to tRNA(Tyr) in a two-step reaction: tyrosine is first activated by ATP to form Tyr-AMP and then transferred to the acceptor end of tRNA(Tyr). The polypeptide is Tyrosine--tRNA ligase (Agrobacterium fabrum (strain C58 / ATCC 33970) (Agrobacterium tumefaciens (strain C58))).